The following is a 130-amino-acid chain: Small ribosomal subunit protein uS9 (130 aa).

It belongs to the universal ribosomal protein uS9 family.

The chain is Small ribosomal subunit protein uS9 from Magnetococcus marinus (strain ATCC BAA-1437 / JCM 17883 / MC-1).